We begin with the raw amino-acid sequence, 542 residues long: Protein phosphatase 1G (542 aa).

Glycine 2 carries N-myristoyl glycine lipidation. Arginine 22 bears the Omega-N-methylarginine mark. The PPM-type phosphatase domain maps to 26–502; the sequence is PYGFSAMQGW…DNMTCIIICF (477 aa). Mn(2+) is bound by residues aspartate 60 and glycine 61. Disordered regions lie at residues 117–136 and 164–325; these read IAGRPTEDEDDKDKVADEDD and CQKV…SDSG. Residue threonine 122 is modified to Phosphothreonine. 2 stretches are compositionally biased toward acidic residues: residues 123-136 and 259-309; these read EDEDDKDKVADEDD and DSED…DEEM. Position 380 is an N6-acetyllysine (lysine 380). The Mn(2+) site is built by aspartate 438 and aspartate 493. Residues 513-542 form a disordered region; it reads ESGKRKLEEALSTEGAEDTGNSDKKKAKRD. Serine 524 bears the Phosphoserine mark.

The protein belongs to the PP2C family. In terms of assembly, interacts with NOL3; may dephosphorylate NOL3. Requires Mg(2+) as cofactor. The cofactor is Mn(2+). As to expression, highly expressed in testis. Low level of expression in kidney. Also expressed in a number of tissues undergoing proliferation including embryo, uterus at pregnancy, placenta, and ovaries.

It is found in the nucleus. It localises to the membrane. It catalyses the reaction O-phospho-L-seryl-[protein] + H2O = L-seryl-[protein] + phosphate. The catalysed reaction is O-phospho-L-threonyl-[protein] + H2O = L-threonyl-[protein] + phosphate. Its function is as follows. May be involved in regulation of cell cycle. The protein is Protein phosphatase 1G (Ppm1g) of Mus musculus (Mouse).